A 323-amino-acid chain; its full sequence is Ribosomal protein L11 methyltransferase (323 aa).

T160, G184, D206, and N257 together coordinate S-adenosyl-L-methionine.

It belongs to the methyltransferase superfamily. PrmA family.

The protein resides in the cytoplasm. The enzyme catalyses L-lysyl-[protein] + 3 S-adenosyl-L-methionine = N(6),N(6),N(6)-trimethyl-L-lysyl-[protein] + 3 S-adenosyl-L-homocysteine + 3 H(+). In terms of biological role, methylates ribosomal protein L11. The chain is Ribosomal protein L11 methyltransferase from Agathobacter rectalis (strain ATCC 33656 / DSM 3377 / JCM 17463 / KCTC 5835 / VPI 0990) (Eubacterium rectale).